Reading from the N-terminus, the 216-residue chain is Protein ADP-ribose pyrophosphatase ORF38 (216 aa).

Positions 1-177 (MRNAAGLFMI…DYSNYIEFFD (177 aa)) constitute a Nudix hydrolase domain. Residues 48–70 (GHRDCCDAKVYETAVREFVEETG) carry the Nudix box motif.

The protein resides in the host cytoplasm. Its subcellular location is the host nucleus. The enzyme catalyses ADP-D-ribose + H2O = D-ribose 5-phosphate + AMP + 2 H(+). Plays an important role in virus replication most probably through its hydrolyzing ADP-ribose activity in host cells. May function in viral DNA replication or transcription directly, or by removing toxic substances or metabolic intermediates. The chain is Protein ADP-ribose pyrophosphatase ORF38 from Lepidoptera (butterflies and moths).